Here is a 497-residue protein sequence, read N- to C-terminus: Guanosine-5'-triphosphate,3'-diphosphate pyrophosphatase (497 aa).

Belongs to the GppA/Ppx family. GppA subfamily.

The enzyme catalyses guanosine 3'-diphosphate 5'-triphosphate + H2O = guanosine 3',5'-bis(diphosphate) + phosphate + H(+). It functions in the pathway purine metabolism; ppGpp biosynthesis; ppGpp from GTP: step 2/2. In terms of biological role, catalyzes the conversion of pppGpp to ppGpp. Guanosine pentaphosphate (pppGpp) is a cytoplasmic signaling molecule which together with ppGpp controls the 'stringent response', an adaptive process that allows bacteria to respond to amino acid starvation, resulting in the coordinated regulation of numerous cellular activities. The chain is Guanosine-5'-triphosphate,3'-diphosphate pyrophosphatase from Vibrio campbellii (strain ATCC BAA-1116).